We begin with the raw amino-acid sequence, 446 residues long: Eukaryotic translation initiation factor 3 subunit E (446 aa).

The PCI domain occupies 256-425; sequence TDLFFSPAYI…GTVIMNHPPQ (170 aa).

Belongs to the eIF-3 subunit E family. As to quaternary structure, component of the eukaryotic translation initiation factor 3 (eIF-3) complex.

The protein localises to the cytoplasm. Its function is as follows. Component of the eukaryotic translation initiation factor 3 (eIF-3) complex, which is involved in protein synthesis of a specialized repertoire of mRNAs and, together with other initiation factors, stimulates binding of mRNA and methionyl-tRNAi to the 40S ribosome. The eIF-3 complex specifically targets and initiates translation of a subset of mRNAs involved in cell proliferation. The protein is Eukaryotic translation initiation factor 3 subunit E (int6) of Aspergillus terreus (strain NIH 2624 / FGSC A1156).